We begin with the raw amino-acid sequence, 228 residues long: Orotidine 5'-phosphate decarboxylase (228 aa).

Residues Asp-8, Lys-30, 59-68, Thr-118, Arg-178, Gln-187, Gly-207, and Arg-208 each bind substrate; that span reads DLKLHDIPNT. Lys-61 serves as the catalytic Proton donor.

This sequence belongs to the OMP decarboxylase family. Type 1 subfamily. Homodimer.

It catalyses the reaction orotidine 5'-phosphate + H(+) = UMP + CO2. It functions in the pathway pyrimidine metabolism; UMP biosynthesis via de novo pathway; UMP from orotate: step 2/2. Catalyzes the decarboxylation of orotidine 5'-monophosphate (OMP) to uridine 5'-monophosphate (UMP). This Wolinella succinogenes (strain ATCC 29543 / DSM 1740 / CCUG 13145 / JCM 31913 / LMG 7466 / NCTC 11488 / FDC 602W) (Vibrio succinogenes) protein is Orotidine 5'-phosphate decarboxylase.